We begin with the raw amino-acid sequence, 107 residues long: MSGDKDFDKDSDVTVITRTTPQTKKPQPYKVLMLNDDYTPMEFVVLCLQRFFRMGIEDATKVMLQVHQRGVGICGVFTYEVAETKVNQVVDFARQHQHPLQCTLEKA.

Residues 1-12 (MSGDKDFDKDSD) show a composition bias toward basic and acidic residues. The segment at 1–21 (MSGDKDFDKDSDVTVITRTTP) is disordered.

It belongs to the ClpS family. As to quaternary structure, binds to the N-terminal domain of the chaperone ClpA.

Involved in the modulation of the specificity of the ClpAP-mediated ATP-dependent protein degradation. The sequence is that of ATP-dependent Clp protease adapter protein ClpS from Zymomonas mobilis subsp. mobilis (strain ATCC 31821 / ZM4 / CP4).